We begin with the raw amino-acid sequence, 227 residues long: Charged multivesicular body protein 4c (227 aa).

The segment at Met-1–Gln-27 is disordered. 2 coiled-coil regions span residues Lys-32–Glu-94 and Leu-129–Val-187. The disordered stretch occupies residues Glu-178–Thr-227. Low complexity predominate over residues Leu-189–Pro-206.

It belongs to the SNF7 family. In terms of assembly, probable core component of the endosomal sorting required for transport complex III (ESCRT-III). ESCRT-III components are thought to multimerize to form a flat lattice on the perimeter membrane of the endosome.

Its subcellular location is the cytoplasm. The protein resides in the cytosol. It localises to the late endosome membrane. Its function is as follows. Probable core component of the endosomal sorting required for transport complex III (ESCRT-III) which is involved in multivesicular bodies (MVBs) formation and sorting of endosomal cargo proteins into MVBs. MVBs contain intraluminal vesicles (ILVs) that are generated by invagination and scission from the limiting membrane of the endosome and mostly are delivered to lysosomes enabling degradation of membrane proteins, such as stimulated growth factor receptors, lysosomal enzymes and lipids. Key component of the cytokinesis checkpoint, a process required to delay abscission to prevent both premature resolution of intercellular chromosome bridges and accumulation of DNA damage. The chain is Charged multivesicular body protein 4c (chmp4c) from Xenopus laevis (African clawed frog).